Here is a 205-residue protein sequence, read N- to C-terminus: uncharacterized protein (205 aa).

Residues 72-114 (ARVSPYGYESDSENEEYTRISSATSSNVLTDSPTTTQDDPTGR) form a disordered region. Positions 90-100 (RISSATSSNVL) are enriched in polar residues. Residues 101 to 110 (TDSPTTTQDD) show a composition bias toward low complexity.

This is an uncharacterized protein from Equus caballus (Horse).